Here is a 526-residue protein sequence, read N- to C-terminus: Histidine ammonia-lyase (526 aa).

A cross-link (5-imidazolinone (Ala-Gly)) is located at residues 143–145; that stretch reads ASG. Residue Ser144 is modified to 2,3-didehydroalanine (Ser).

It belongs to the PAL/histidase family. Contains an active site 4-methylidene-imidazol-5-one (MIO), which is formed autocatalytically by cyclization and dehydration of residues Ala-Ser-Gly.

It is found in the cytoplasm. It carries out the reaction L-histidine = trans-urocanate + NH4(+). Its pathway is amino-acid degradation; L-histidine degradation into L-glutamate; N-formimidoyl-L-glutamate from L-histidine: step 1/3. The polypeptide is Histidine ammonia-lyase (Aromatoleum aromaticum (strain DSM 19018 / LMG 30748 / EbN1) (Azoarcus sp. (strain EbN1))).